We begin with the raw amino-acid sequence, 441 residues long: G-protein coupled receptor family C group 5 member C (441 aa).

A signal peptide spans 1–22; it reads MATHKTLLMCLGLPLFFPGALA. At 23–49 the chain is on the extracellular side; sequence QNHAPPGCSPDLDPLYYNLCDRSGAWG. The helical transmembrane segment at 50–70 threads the bilayer; that stretch reads IVLEAVAGAGIITTFVLTIIL. Topologically, residues 71 to 84 are cytoplasmic; that stretch reads VASLPFVQDTKKRS. Residues 85 to 105 traverse the membrane as a helical segment; sequence LLGTQVFFLLGTLGLFCLVFA. At 106 to 119 the chain is on the extracellular side; that stretch reads CVVKPDFSTCASRR. A helical membrane pass occupies residues 120-140; sequence FLFGVLFAICFSCLIAHTLSL. Topologically, residues 141-154 are cytoplasmic; the sequence is NFLARKNHGPRGWV. Residues 155 to 175 traverse the membrane as a helical segment; the sequence is IFTVALLLTLVEVIINTEWLI. Over 176–207 the chain is Extracellular; the sequence is ITLVRGGGQVSTPGNGSADWTVTSPCAIANMD. N190 is a glycosylation site (N-linked (GlcNAc...) asparagine). A helical transmembrane segment spans residues 208–228; sequence FVMALIYVMLLLLAAFLGAWP. Residues 229–240 lie on the Cytoplasmic side of the membrane; sequence TLCGRFKRWRKH. Residues 241–261 traverse the membrane as a helical segment; sequence GVFVLLTTATSIAIWVVWIVM. Residues 262-278 lie on the Extracellular side of the membrane; it reads YTYGNKQHHSPTWDDPT. A helical membrane pass occupies residues 279–299; the sequence is LAIALAANAWTFVFFYVIPEV. Residues 300–441 are Cytoplasmic-facing; sequence SQVTKPSPEQ…DQSPKNKTRW (142 aa). Residues S343, S382, S402, and S405 each carry the phosphoserine modification. Y413 is subject to Phosphotyrosine. The tract at residues 419-441 is disordered; the sequence is QVATPTKDGKISQDQSPKNKTRW. T422 is modified (phosphothreonine). Residues 430–441 are compositionally biased toward polar residues; sequence SQDQSPKNKTRW. S434 carries the phosphoserine modification.

The protein belongs to the G-protein coupled receptor 3 family.

The protein localises to the cell membrane. Functionally, this retinoic acid-inducible G-protein coupled receptor provide evidence for a possible interaction between retinoid and G-protein signaling pathways. The chain is G-protein coupled receptor family C group 5 member C (Gprc5c) from Rattus norvegicus (Rat).